Here is a 230-residue protein sequence, read N- to C-terminus: Response regulator MprA (230 aa).

One can recognise a Response regulatory domain in the interval 4 to 118 (RILVVDDDRA…ELLARMRALL (115 aa)). Residue aspartate 48 is modified to 4-aspartylphosphate. The ompR/PhoB-type DNA-binding region spans 129-227 (SMAMRFSDLT…VRGVGYVLRE (99 aa)).

Post-translationally, phosphorylated and dephosphorylated by MprB.

The protein resides in the cytoplasm. Its function is as follows. Member of the two-component regulatory system MprB/MprA which contributes to maintaining a balance among several systems involved in stress resistance and is required for establishment and maintenance of persistent infection in the host. Functions as a transcriptional regulator that recognizes a 19-bp nucleotide motif comprizing two loosely conserved 8-bp direct DNA-binding motif repeats separated by a 3-bp spacer region. This is Response regulator MprA (mprA) from Mycobacterium tuberculosis (strain ATCC 25177 / H37Ra).